A 327-amino-acid polypeptide reads, in one-letter code: 3' cyclic ADP-D-ribose synthase AaTIR (327 aa).

Positions 10-120 are TIR domain; sequence VALSFAGENR…GILKTIGYIN (111 aa). Residue K229 is part of the active site.

In terms of assembly, homodimer.

It catalyses the reaction NADP(+) + H2O = ADP-D-ribose 2'-phosphate + nicotinamide + H(+). The enzyme catalyses NAD(+) = 3'cADPR + nicotinamide + H(+). In terms of biological role, NAD(+) hydrolase (NADase) that generates 3'cADPR, a cyclization variant of cyclic ADP-D-ribose (also called v2-cADPR). Also cleaves NADP(+), but does not cyclize the product. The sequence is that of 3' cyclic ADP-D-ribose synthase AaTIR from Aquimarina amphilecti.